A 134-amino-acid chain; its full sequence is MSRDTIAEVLTVIRNANMDGKKTVKIPSSNITENIIKLLLREGFLENVRKHYENGNYFLVLTLRHQKTKKGTFTNILNLKKISRPGRRIYSTSKKIPRILGGIGIVILSTSHGILTDREARLEGIGGEILCYIW.

Belongs to the universal ribosomal protein uS8 family. Part of the 30S ribosomal subunit.

It is found in the plastid. Functionally, one of the primary rRNA binding proteins, it binds directly to 16S rRNA central domain where it helps coordinate assembly of the platform of the 30S subunit. The chain is Small ribosomal subunit protein uS8c (rps8) from Cuscuta obtusiflora (Peruvian dodder).